A 318-amino-acid polypeptide reads, in one-letter code: 2-desacetyl-2-hydroxyethyl bacteriochlorophyllide A dehydrogenase (318 aa).

It participates in porphyrin-containing compound metabolism; bacteriochlorophyll biosynthesis (light-independent). Functionally, this protein catalyzes the penultimate step in bacteriochlorophyll a biosynthesis. The polypeptide is 2-desacetyl-2-hydroxyethyl bacteriochlorophyllide A dehydrogenase (bchC) (Cereibacter sphaeroides (strain ATCC 17023 / DSM 158 / JCM 6121 / CCUG 31486 / LMG 2827 / NBRC 12203 / NCIMB 8253 / ATH 2.4.1.) (Rhodobacter sphaeroides)).